A 321-amino-acid polypeptide reads, in one-letter code: Arginine-hydroxylase NDUFAF5, mitochondrial (321 aa).

Residues 1-25 constitute a mitochondrion transit peptide; the sequence is MNVSVKSLRGVSRTWRSFSSRQGMN.

It belongs to the methyltransferase superfamily. As to quaternary structure, interacts with NDUFS7.

The protein localises to the mitochondrion inner membrane. Arginine hydroxylase that mediates hydroxylation of 'Arg-111' of NDUFS7 and is involved in the assembly of mitochondrial NADH:ubiquinone oxidoreductase complex (complex I, MT-ND1) at early stages. May also have methyltransferase activity. The protein is Arginine-hydroxylase NDUFAF5, mitochondrial of Danio rerio (Zebrafish).